The chain runs to 313 residues: 4-hydroxy-3-methylbut-2-enyl diphosphate reductase (313 aa).

C12 is a binding site for [4Fe-4S] cluster. (2E)-4-hydroxy-3-methylbut-2-enyl diphosphate is bound by residues H41 and H74. The dimethylallyl diphosphate site is built by H41 and H74. Isopentenyl diphosphate is bound by residues H41 and H74. C96 is a [4Fe-4S] cluster binding site. H124 is a (2E)-4-hydroxy-3-methylbut-2-enyl diphosphate binding site. Residue H124 participates in dimethylallyl diphosphate binding. H124 is an isopentenyl diphosphate binding site. E126 (proton donor) is an active-site residue. T167 is a (2E)-4-hydroxy-3-methylbut-2-enyl diphosphate binding site. C197 serves as a coordination point for [4Fe-4S] cluster. Residues S225, S226, N227, and S269 each coordinate (2E)-4-hydroxy-3-methylbut-2-enyl diphosphate. Residues S225, S226, N227, and S269 each coordinate dimethylallyl diphosphate. Residues S225, S226, N227, and S269 each contribute to the isopentenyl diphosphate site.

The protein belongs to the IspH family. The cofactor is [4Fe-4S] cluster.

It carries out the reaction isopentenyl diphosphate + 2 oxidized [2Fe-2S]-[ferredoxin] + H2O = (2E)-4-hydroxy-3-methylbut-2-enyl diphosphate + 2 reduced [2Fe-2S]-[ferredoxin] + 2 H(+). It catalyses the reaction dimethylallyl diphosphate + 2 oxidized [2Fe-2S]-[ferredoxin] + H2O = (2E)-4-hydroxy-3-methylbut-2-enyl diphosphate + 2 reduced [2Fe-2S]-[ferredoxin] + 2 H(+). It functions in the pathway isoprenoid biosynthesis; dimethylallyl diphosphate biosynthesis; dimethylallyl diphosphate from (2E)-4-hydroxy-3-methylbutenyl diphosphate: step 1/1. The protein operates within isoprenoid biosynthesis; isopentenyl diphosphate biosynthesis via DXP pathway; isopentenyl diphosphate from 1-deoxy-D-xylulose 5-phosphate: step 6/6. Its function is as follows. Catalyzes the conversion of 1-hydroxy-2-methyl-2-(E)-butenyl 4-diphosphate (HMBPP) into a mixture of isopentenyl diphosphate (IPP) and dimethylallyl diphosphate (DMAPP). Acts in the terminal step of the DOXP/MEP pathway for isoprenoid precursor biosynthesis. In Methylococcus capsulatus (strain ATCC 33009 / NCIMB 11132 / Bath), this protein is 4-hydroxy-3-methylbut-2-enyl diphosphate reductase.